Consider the following 470-residue polypeptide: UTP--glucose-1-phosphate uridylyltransferase 1 (470 aa).

N-acetylalanine is present on A2. UTP contacts are provided by residues 86 to 89 (LNGG), K100, Q163, and G192. Substrate is bound at residue 88–89 (GG). Residues H193 and 221–223 (NSD) contribute to the substrate site. Residues D223 and K361 each coordinate UTP.

Belongs to the UDPGP type 1 family. As to expression, expressed in roots, rosette leaves, cauline leaves, stems, flowers and siliques.

It localises to the cytoplasm. The catalysed reaction is alpha-D-glucose 1-phosphate + UTP + H(+) = UDP-alpha-D-glucose + diphosphate. In terms of biological role, converts glucose 1-phosphate to UDP-glucose, which is the major glycosyl donor for polysaccharides. Acts redundantly with UGP2 and is essential for the synthesis of sucrose, starch and cell wall, and callose deposition. Involved in the regulation of the programmed cell death (PCD) induced by the fungal toxin fumonisin B1 (FB1). The chain is UTP--glucose-1-phosphate uridylyltransferase 1 from Arabidopsis thaliana (Mouse-ear cress).